Consider the following 435-residue polypeptide: UDP-glucuronic acid decarboxylase 1 (435 aa).

Positions 1–33 (MKQLHKQMSSKRDEETIPMSQSSPYSPKTLKHP) are disordered. Topologically, residues 1–48 (MKQLHKQMSSKRDEETIPMSQSSPYSPKTLKHPRSLPRSLHYLFREQR) are cytoplasmic. Residues 49 to 69 (LLFILVGILIGSTFFILQPSL) traverse the membrane as a helical; Signal-anchor for type II membrane protein segment. Topologically, residues 70 to 435 (SRLGAAESTS…ILNEDEGKGL (366 aa)) are lumenal. The segment covering 91–100 (DSPPSRSTFN) has biased composition (polar residues). A disordered region spans residues 91–110 (DSPPSRSTFNSGGGGGRTGR). Residues Gly-129, Phe-130, Val-131, Asp-150, Asn-151, Phe-153, Thr-154, Gly-155, Asp-175, and Val-176 each coordinate NAD(+). Ile-180 lines the UDP-alpha-D-glucuronate pocket. Leu-190 is a binding site for NAD(+). UDP-alpha-D-glucuronate is bound at residue Lys-208. NAD(+) is bound at residue Thr-209. UDP-alpha-D-glucuronate-binding residues include Asn-216, Gly-219, Lys-222, and Arg-223. NAD(+)-binding residues include Tyr-262 and Lys-266. Tyr-262 acts as the Proton acceptor in catalysis. Tyr-276 contacts UDP-alpha-D-glucuronate. Positions 292 and 303 each coordinate NAD(+). A disordered region spans residues 380-401 (EFKPNTADDPHKRKPDISKAKE). The segment covering 385–401 (TADDPHKRKPDISKAKE) has biased composition (basic and acidic residues).

It belongs to the NAD(P)-dependent epimerase/dehydratase family. UDP-glucuronic acid decarboxylase subfamily. NAD(+) is required as a cofactor. As to expression, ubiquitous.

Its subcellular location is the golgi apparatus. The protein resides in the golgi stack membrane. It carries out the reaction UDP-alpha-D-glucuronate + H(+) = UDP-alpha-D-xylose + CO2. It functions in the pathway nucleotide-sugar biosynthesis; UDP-alpha-D-xylose biosynthesis; UDP-alpha-D-xylose from UDP-alpha-D-glucuronate: step 1/1. Functionally, catalyzes the NAD-dependent decarboxylation of UDP-glucuronic acid to UDP-xylose. Necessary for the biosynthesis of the core tetrasaccharide in glycosaminoglycan biosynthesis. The sequence is that of UDP-glucuronic acid decarboxylase 1 from Arabidopsis thaliana (Mouse-ear cress).